A 347-amino-acid chain; its full sequence is Tetraacyldisaccharide 4'-kinase (347 aa).

64–71 (YVGGTGKT) is an ATP binding site.

This sequence belongs to the LpxK family.

It carries out the reaction a lipid A disaccharide + ATP = a lipid IVA + ADP + H(+). It functions in the pathway glycolipid biosynthesis; lipid IV(A) biosynthesis; lipid IV(A) from (3R)-3-hydroxytetradecanoyl-[acyl-carrier-protein] and UDP-N-acetyl-alpha-D-glucosamine: step 6/6. Functionally, transfers the gamma-phosphate of ATP to the 4'-position of a tetraacyldisaccharide 1-phosphate intermediate (termed DS-1-P) to form tetraacyldisaccharide 1,4'-bis-phosphate (lipid IVA). The chain is Tetraacyldisaccharide 4'-kinase from Bordetella bronchiseptica (strain ATCC BAA-588 / NCTC 13252 / RB50) (Alcaligenes bronchisepticus).